Reading from the N-terminus, the 222-residue chain is 2-C-methyl-D-erythritol 4-phosphate cytidylyltransferase (222 aa).

The protein belongs to the IspD/TarI cytidylyltransferase family. IspD subfamily.

The catalysed reaction is 2-C-methyl-D-erythritol 4-phosphate + CTP + H(+) = 4-CDP-2-C-methyl-D-erythritol + diphosphate. The protein operates within isoprenoid biosynthesis; isopentenyl diphosphate biosynthesis via DXP pathway; isopentenyl diphosphate from 1-deoxy-D-xylulose 5-phosphate: step 2/6. Its function is as follows. Catalyzes the formation of 4-diphosphocytidyl-2-C-methyl-D-erythritol from CTP and 2-C-methyl-D-erythritol 4-phosphate (MEP). This is 2-C-methyl-D-erythritol 4-phosphate cytidylyltransferase from Thermotoga sp. (strain RQ2).